We begin with the raw amino-acid sequence, 124 residues long: S-adenosylmethionine decarboxylase proenzyme (124 aa).

Serine 71 acts as the Schiff-base intermediate with substrate; via pyruvic acid in catalysis. Serine 71 is subject to Pyruvic acid (Ser); by autocatalysis. Histidine 76 serves as the catalytic Proton acceptor; for processing activity. Catalysis depends on cysteine 91, which acts as the Proton donor; for catalytic activity.

This sequence belongs to the prokaryotic AdoMetDC family. Type 1 subfamily. Heterotetramer of two alpha and two beta chains arranged as a dimer of alpha/beta heterodimers. It depends on pyruvate as a cofactor. In terms of processing, is synthesized initially as an inactive proenzyme. Formation of the active enzyme involves a self-maturation process in which the active site pyruvoyl group is generated from an internal serine residue via an autocatalytic post-translational modification. Two non-identical subunits are generated from the proenzyme in this reaction, and the pyruvate is formed at the N-terminus of the alpha chain, which is derived from the carboxyl end of the proenzyme. The post-translation cleavage follows an unusual pathway, termed non-hydrolytic serinolysis, in which the side chain hydroxyl group of the serine supplies its oxygen atom to form the C-terminus of the beta chain, while the remainder of the serine residue undergoes an oxidative deamination to produce ammonia and the pyruvoyl group blocking the N-terminus of the alpha chain.

It catalyses the reaction S-adenosyl-L-methionine + H(+) = S-adenosyl 3-(methylsulfanyl)propylamine + CO2. The protein operates within amine and polyamine biosynthesis; S-adenosylmethioninamine biosynthesis; S-adenosylmethioninamine from S-adenosyl-L-methionine: step 1/1. With respect to regulation, competitively inhibited by methylglyoxal bis-guanylhydrazone. Irreversibly inhibited by NaBH(4) in vitro. Functionally, catalyzes the decarboxylation of S-adenosylmethionine to S-adenosylmethioninamine (dcAdoMet), the propylamine donor required for the synthesis of the polyamines spermine and spermidine from the diamine putrescine. Has no arginine decarboxylase (ArgDC) activity. In Saccharolobus solfataricus (strain ATCC 35092 / DSM 1617 / JCM 11322 / P2) (Sulfolobus solfataricus), this protein is S-adenosylmethionine decarboxylase proenzyme (speH).